Reading from the N-terminus, the 460-residue chain is ERAD-associated E3 ubiquitin-protein ligase HRD1B (460 aa).

Over 1–3 (MIQ) the chain is Cytoplasmic. The helical transmembrane segment at 4–24 (LKVYAGLSTLATLVVIYHAFS) threads the bilayer. Over 25-40 (SRGQFYPATVYLSTSK) the chain is Lumenal. A helical membrane pass occupies residues 41 to 61 (INLVVLLNMGLVLMLSLWNLV). Residues 62 to 98 (KIVFLGSLREAEVERLNEQAWRELMEILFAITIFRQD) are Cytoplasmic-facing. A helical transmembrane segment spans residues 99–119 (FSVGFISLVVTLLLIKGLHWM). The Lumenal portion of the chain corresponds to 120-140 (AQKRVEYIETTPSVTLLSHVR). A helical membrane pass occupies residues 141 to 161 (IVSFMVFLLILDCLLTYSSIQ). Topologically, residues 162–170 (QLIQSRKAS) are cytoplasmic. Residues 171 to 191 (MSVFFTFEYMILATTTVSIIV) traverse the membrane as a helical segment. The Lumenal segment spans residues 192-225 (KYAFYVTDMLKEGQWEGKPVYTFYLELVRDLLHL). A helical membrane pass occupies residues 226–246 (SMYLCFFLMIFMNYGLPLHLI). Over 247-460 (RELYETFRNF…TKGKSVADTA (214 aa)) the chain is Cytoplasmic. Residues 292–330 (CIICREEMTSAKKLVCGHLFHVHCLRSWLERQNTCPTCR) form an RING-type; atypical zinc finger. The segment at 339-378 (ATSTASGNRGPHQESLQQGTGTSSSDGQGSSVSAAASENM) is disordered. Positions 353 to 375 (SLQQGTGTSSSDGQGSSVSAAAS) are enriched in low complexity.

Belongs to the HRD1 family.

Its subcellular location is the endoplasmic reticulum membrane. It catalyses the reaction S-ubiquitinyl-[E2 ubiquitin-conjugating enzyme]-L-cysteine + [acceptor protein]-L-lysine = [E2 ubiquitin-conjugating enzyme]-L-cysteine + N(6)-ubiquitinyl-[acceptor protein]-L-lysine.. It participates in protein modification; protein ubiquitination. Functionally, probable component of the HRD1 ubiquitin ligase complex that mediates the rapid degradation of misfolded endoplasmic reticulum (ER) proteins, a process called ER-associated degradation (ERAD). Targets the misfolded LRR receptor kinase BRI1. Functions redundantly with HRD3A. The chain is ERAD-associated E3 ubiquitin-protein ligase HRD1B from Arabidopsis thaliana (Mouse-ear cress).